The chain runs to 181 residues: MQKCIMRSTEFKTHFSFHSIFSFPLSAALLALISASEPASKAFINVQFISSPLVKKEVLPFIVSFHSLSSNGILSFSPFTSSNLSIAQLPFLIKVPLLSMGSLALENFNKFIPRADLVAAWVTIIMVFTFGNFLSTLSIKTGQNLWHLSKISSSVSPLLLGIILGSQSGEIMLGKNLLITS.

Residues 1–14 lie on the Cytoplasmic side of the membrane; the sequence is MQKCIMRSTEFKTH. A helical transmembrane segment spans residues 15-35; it reads FSFHSIFSFPLSAALLALISA. The Extracellular segment spans residues 36 to 58; the sequence is SEPASKAFINVQFISSPLVKKEV. A helical transmembrane segment spans residues 59–79; sequence LPFIVSFHSLSSNGILSFSPF. Residues 80–84 are Cytoplasmic-facing; the sequence is TSSNL. A helical membrane pass occupies residues 85-105; it reads SIAQLPFLIKVPLLSMGSLAL. At 106 to 116 the chain is on the extracellular side; it reads ENFNKFIPRAD. Residues 117–137 traverse the membrane as a helical segment; the sequence is LVAAWVTIIMVFTFGNFLSTL. Over 138-153 the chain is Cytoplasmic; that stretch reads SIKTGQNLWHLSKISS. Residues 154–174 traverse the membrane as a helical segment; the sequence is SVSPLLLGIILGSQSGEIMLG. The Extracellular portion of the chain corresponds to 175 to 181; the sequence is KNLLITS.

The protein localises to the membrane. This is an uncharacterized protein from Saccharomyces cerevisiae (strain ATCC 204508 / S288c) (Baker's yeast).